Here is a 394-residue protein sequence, read N- to C-terminus: Ribose-phosphate pyrophosphokinase 5, chloroplastic (394 aa).

The transit peptide at 1–33 (MASIVQPSPTFPALNLRRSSLIRPPSSVRFPLK) directs the protein to the chloroplast. 4 residues coordinate Mg(2+): D202, H204, D213, and D217. The tract at residues 288-303 (GKVAIMVDDMIDTAGT) is binding of phosphoribosylpyrophosphate.

Belongs to the ribose-phosphate pyrophosphokinase family.

The protein localises to the plastid. It is found in the chloroplast. It catalyses the reaction D-ribose 5-phosphate + ATP = 5-phospho-alpha-D-ribose 1-diphosphate + AMP + H(+). This Arabidopsis thaliana (Mouse-ear cress) protein is Ribose-phosphate pyrophosphokinase 5, chloroplastic (PRS5).